The following is a 493-amino-acid chain: Cysteine--tRNA ligase (493 aa).

Residue cysteine 29 participates in Zn(2+) binding. Residues 31 to 41 (VTVYDLCHLGH) carry the 'HIGH' region motif. Zn(2+) contacts are provided by cysteine 213, histidine 238, and glutamate 242. Residues 270 to 274 (KMSKS) carry the 'KMSKS' region motif. Lysine 273 provides a ligand contact to ATP.

This sequence belongs to the class-I aminoacyl-tRNA synthetase family. Monomer. It depends on Zn(2+) as a cofactor.

The protein resides in the cytoplasm. The catalysed reaction is tRNA(Cys) + L-cysteine + ATP = L-cysteinyl-tRNA(Cys) + AMP + diphosphate. The sequence is that of Cysteine--tRNA ligase from Parasynechococcus marenigrum (strain WH8102).